A 355-amino-acid chain; its full sequence is Capsular polysaccharide biosynthesis glycosyltransferase CapH (355 aa).

The protein belongs to the glycosyltransferase group 1 family. Glycosyltransferase 4 subfamily.

It functions in the pathway capsule biogenesis; capsule polysaccharide biosynthesis. Its function is as follows. Required for the biosynthesis of type 1 capsular polysaccharide. This chain is Capsular polysaccharide biosynthesis glycosyltransferase CapH (capH), found in Staphylococcus aureus.